The primary structure comprises 369 residues: DNA replication and repair protein RecF (369 aa).

An ATP-binding site is contributed by 30–37 (GQNAQGKT).

The protein belongs to the RecF family.

The protein resides in the cytoplasm. Functionally, the RecF protein is involved in DNA metabolism; it is required for DNA replication and normal SOS inducibility. RecF binds preferentially to single-stranded, linear DNA. It also seems to bind ATP. The sequence is that of DNA replication and repair protein RecF from Acetivibrio thermocellus (strain ATCC 27405 / DSM 1237 / JCM 9322 / NBRC 103400 / NCIMB 10682 / NRRL B-4536 / VPI 7372) (Clostridium thermocellum).